We begin with the raw amino-acid sequence, 61 residues long: MEKRKTIKVTLVKSLIGTRHSHRLVIKGMGLRRLNHTVSLCDHPSIRGMINKTAYLLKVEE.

The protein belongs to the universal ribosomal protein uL30 family. Part of the 50S ribosomal subunit.

This chain is Large ribosomal subunit protein uL30, found in Nitrosomonas europaea (strain ATCC 19718 / CIP 103999 / KCTC 2705 / NBRC 14298).